A 182-amino-acid polypeptide reads, in one-letter code: uncharacterized protein (182 aa).

It to M.tuberculosis Rv2313c.

This is an uncharacterized protein from Escherichia coli (strain K12).